Reading from the N-terminus, the 58-residue chain is Large ribosomal subunit protein uL24 (58 aa).

Belongs to the universal ribosomal protein uL24 family. As to quaternary structure, part of the 50S ribosomal subunit.

In terms of biological role, one of two assembly initiator proteins, it binds directly to the 5'-end of the 23S rRNA, where it nucleates assembly of the 50S subunit. One of the proteins that surrounds the polypeptide exit tunnel on the outside of the subunit. The protein is Large ribosomal subunit protein uL24 (rplX) of Spiroplasma citri.